A 183-amino-acid chain; its full sequence is Acireductone dioxygenase (183 aa).

Positions 1–21 (MVQAWYMDSDTTTDQREEHQL) are disordered. Fe(2+) is bound by residues His-90, His-92, Glu-96, and His-135. His-90, His-92, Glu-96, and His-135 together coordinate Ni(2+).

This sequence belongs to the acireductone dioxygenase (ARD) family. Requires Fe(2+) as cofactor. It depends on Ni(2+) as a cofactor.

The protein resides in the cytoplasm. It is found in the nucleus. It carries out the reaction 1,2-dihydroxy-5-(methylsulfanyl)pent-1-en-3-one + O2 = 4-methylsulfanyl-2-oxobutanoate + formate + 2 H(+). The catalysed reaction is 1,2-dihydroxy-5-(methylsulfanyl)pent-1-en-3-one + O2 = 3-(methylsulfanyl)propanoate + CO + formate + 2 H(+). It participates in amino-acid biosynthesis; L-methionine biosynthesis via salvage pathway; L-methionine from S-methyl-5-thio-alpha-D-ribose 1-phosphate: step 5/6. Its function is as follows. Catalyzes 2 different reactions between oxygen and the acireductone 1,2-dihydroxy-3-keto-5-methylthiopentene (DHK-MTPene) depending upon the metal bound in the active site. Fe-containing acireductone dioxygenase (Fe-ARD) produces formate and 2-keto-4-methylthiobutyrate (KMTB), the alpha-ketoacid precursor of methionine in the methionine recycle pathway. Ni-containing acireductone dioxygenase (Ni-ARD) produces methylthiopropionate, carbon monoxide and formate, and does not lie on the methionine recycle pathway. This Ixodes scapularis (Black-legged tick) protein is Acireductone dioxygenase.